The sequence spans 201 residues: Oligoribonuclease (201 aa).

Positions 20-183 constitute an Exonuclease domain; sequence LVWLDMEMTG…ADIHESIDEL (164 aa). The active site involves Tyr-141.

Belongs to the oligoribonuclease family.

The protein resides in the cytoplasm. Functionally, 3'-to-5' exoribonuclease specific for small oligoribonucleotides. This Burkholderia pseudomallei (strain 1106a) protein is Oligoribonuclease.